A 197-amino-acid polypeptide reads, in one-letter code: Thymidine kinase (197 aa).

ATP is bound by residues 9–16 (AAMNAGKS) and 83–86 (DESQ). Glu-84 acts as the Proton acceptor in catalysis. The Zn(2+) site is built by Cys-141, Cys-143, Cys-178, and Cys-181.

The protein belongs to the thymidine kinase family. As to quaternary structure, homotetramer.

The protein resides in the cytoplasm. The catalysed reaction is thymidine + ATP = dTMP + ADP + H(+). The chain is Thymidine kinase from Albidiferax ferrireducens (strain ATCC BAA-621 / DSM 15236 / T118) (Rhodoferax ferrireducens).